A 272-amino-acid chain; its full sequence is Glutamate racemase (272 aa).

Substrate is bound by residues 13-14 and 45-46; these read DS and YG. The active-site Proton donor/acceptor is the C76. 77-78 lines the substrate pocket; that stretch reads NT. C187 acts as the Proton donor/acceptor in catalysis. Position 188-189 (188-189) interacts with substrate; that stretch reads TH.

Belongs to the aspartate/glutamate racemases family.

The enzyme catalyses L-glutamate = D-glutamate. It participates in cell wall biogenesis; peptidoglycan biosynthesis. Its function is as follows. Provides the (R)-glutamate required for cell wall biosynthesis. The chain is Glutamate racemase from Roseiflexus sp. (strain RS-1).